Here is a 377-residue protein sequence, read N- to C-terminus: Glutamate 5-kinase (377 aa).

Lys-17 contacts ATP. Substrate is bound by residues Ser-56, Asp-143, and Asn-155. An ATP-binding site is contributed by Ser-217–Lys-223. A PUA domain is found at Ala-282–Cys-360.

Belongs to the glutamate 5-kinase family.

It is found in the cytoplasm. The enzyme catalyses L-glutamate + ATP = L-glutamyl 5-phosphate + ADP. It functions in the pathway amino-acid biosynthesis; L-proline biosynthesis; L-glutamate 5-semialdehyde from L-glutamate: step 1/2. Catalyzes the transfer of a phosphate group to glutamate to form L-glutamate 5-phosphate. This chain is Glutamate 5-kinase, found in Maridesulfovibrio salexigens (strain ATCC 14822 / DSM 2638 / NCIMB 8403 / VKM B-1763) (Desulfovibrio salexigens).